The following is a 503-amino-acid chain: Probable cytosol aminopeptidase (503 aa).

Lys270 and Asp275 together coordinate Mn(2+). The active site involves Lys282. Asp293, Asp352, and Glu354 together coordinate Mn(2+). Arg356 is a catalytic residue.

Belongs to the peptidase M17 family. Mn(2+) is required as a cofactor.

The protein localises to the cytoplasm. It catalyses the reaction Release of an N-terminal amino acid, Xaa-|-Yaa-, in which Xaa is preferably Leu, but may be other amino acids including Pro although not Arg or Lys, and Yaa may be Pro. Amino acid amides and methyl esters are also readily hydrolyzed, but rates on arylamides are exceedingly low.. The catalysed reaction is Release of an N-terminal amino acid, preferentially leucine, but not glutamic or aspartic acids.. Functionally, presumably involved in the processing and regular turnover of intracellular proteins. Catalyzes the removal of unsubstituted N-terminal amino acids from various peptides. The sequence is that of Probable cytosol aminopeptidase from Shigella flexneri.